Reading from the N-terminus, the 131-residue chain is Large-conductance mechanosensitive channel (131 aa).

3 helical membrane-spanning segments follow: residues 14–34 (IMDL…VTSL), 38–58 (IIMP…LAVT), and 67–87 (GSFI…FIVI).

The protein belongs to the MscL family. As to quaternary structure, homopentamer.

Its subcellular location is the cell membrane. Functionally, channel that opens in response to stretch forces in the membrane lipid bilayer. May participate in the regulation of osmotic pressure changes within the cell. The sequence is that of Large-conductance mechanosensitive channel from Bacillus velezensis (strain DSM 23117 / BGSC 10A6 / LMG 26770 / FZB42) (Bacillus amyloliquefaciens subsp. plantarum).